A 122-amino-acid chain; its full sequence is Putative iron-sulfur cluster insertion protein ErpA (122 aa).

Iron-sulfur cluster is bound by residues Cys50, Cys114, and Cys116.

It belongs to the HesB/IscA family. In terms of assembly, homodimer. Iron-sulfur cluster is required as a cofactor.

Functionally, required for insertion of 4Fe-4S clusters. The protein is Putative iron-sulfur cluster insertion protein ErpA of Bordetella petrii (strain ATCC BAA-461 / DSM 12804 / CCUG 43448).